A 345-amino-acid polypeptide reads, in one-letter code: MTQITLTTPDDWHLHFRDGDMLGETVPATARLFQRAIVMPNLVPPVTTAAMALAYRDRILAARPQGSNFEPLMTLFLTNNTSAQDIIDAKAAGVVAGKLYPAGATTNSDAAVKALDELFPIFEVMAQQGMLLLVHGEVTESHIDIFDREKMFIDRYLSRIVEAIPSLKVVFEHITTKEAAEFVAEASANVAATITPQHLLLNRNDLLVGGVRPHNFCLPVLKRNIHQHALQAAVATGSSKFFLGTDSAPHEKHRKESACGCAGCYSAWSALELYAQVFDNLGALDKLEGFASLHGADFYGLPRNSGTVTLVKQEWTVPEEIILPNGNPIVPFFAGQKVNWKVKTA.

Positions 13 and 15 each coordinate Zn(2+). Residues 15–17 and Asn41 each bind substrate; that span reads HFR. Residues Lys98, His135, and His173 each coordinate Zn(2+). N6-carboxylysine is present on Lys98. Substrate is bound at residue His135. Leu218 is a binding site for substrate. Asp246 lines the Zn(2+) pocket. Asp246 is a catalytic residue. The substrate site is built by His250 and Ala262.

The protein belongs to the metallo-dependent hydrolases superfamily. DHOase family. Class II DHOase subfamily. In terms of assembly, homodimer. It depends on Zn(2+) as a cofactor.

The enzyme catalyses (S)-dihydroorotate + H2O = N-carbamoyl-L-aspartate + H(+). Its pathway is pyrimidine metabolism; UMP biosynthesis via de novo pathway; (S)-dihydroorotate from bicarbonate: step 3/3. Its function is as follows. Catalyzes the reversible cyclization of carbamoyl aspartate to dihydroorotate. This Shewanella frigidimarina (strain NCIMB 400) protein is Dihydroorotase.